The sequence spans 557 residues: MFKSDIEIAQESKMKNIKNIAEKIGLTEEDIDLYGKYKCKISLDVLKSNKDKKDGKLILVTAINPTPAGEGKSTVTVGLGQALWKKNKKAVIALREPSLGPVFGIKGGAAGGGYSQVVPMEDINLHFTGDMHAITSANNLLAAAIDNHIHQGNILKIDQRRILFKRVMDMNDRALRNVIVALGGKINGFPREDGFMITVASEIMAILCLAEDLMDLKNKMGEILVAYSIEGKPIYCKDLEVQGAMALLMKDAIKPNLVQTLENTPAIIHGGPFANIAHGCNSILGTKMALKLGDYVITEAGFGADLGAEKFFDIKCRKANLKPNCVVIVATVRALKYNGGILKENLKEQNMEALSKGIENLGKHIENVNKFGVPAVVAINKFISDTEEEIEFIKKYCKELGAEVSIAEVWEKGGNGGLELADKVLDTIENKESKFNPIYEETLNIKQKIETIAQEIYGAEGVDYSKEAEKQISEIEKLDLDKKPVCMAKTQYSLSDDAKLLGRPCGFRINVKEVRISNGAGFIVALTGNVMTMPGLPKKPAANNMNVLSDGNIVGLF.

66–73 serves as a coordination point for ATP; it reads TPAGEGKS.

This sequence belongs to the formate--tetrahydrofolate ligase family.

The enzyme catalyses (6S)-5,6,7,8-tetrahydrofolate + formate + ATP = (6R)-10-formyltetrahydrofolate + ADP + phosphate. The protein operates within one-carbon metabolism; tetrahydrofolate interconversion. The polypeptide is Formate--tetrahydrofolate ligase (Clostridium botulinum (strain 657 / Type Ba4)).